The primary structure comprises 299 residues: Protoheme IX farnesyltransferase (299 aa).

9 helical membrane passes run Val26 to Leu46, Phe53 to Ile73, Leu94 to Leu114, Leu121 to Leu141, Ile149 to Gly169, Ala175 to Leu195, Tyr217 to Ile239, Gly243 to Leu265, and Phe277 to Leu297.

It belongs to the UbiA prenyltransferase family. Protoheme IX farnesyltransferase subfamily.

The protein localises to the cell inner membrane. The enzyme catalyses heme b + (2E,6E)-farnesyl diphosphate + H2O = Fe(II)-heme o + diphosphate. It functions in the pathway porphyrin-containing compound metabolism; heme O biosynthesis; heme O from protoheme: step 1/1. Converts heme B (protoheme IX) to heme O by substitution of the vinyl group on carbon 2 of heme B porphyrin ring with a hydroxyethyl farnesyl side group. In Azoarcus sp. (strain BH72), this protein is Protoheme IX farnesyltransferase.